The primary structure comprises 117 residues: NADH-ubiquinone oxidoreductase chain 3 (117 aa).

3 helical membrane-spanning segments follow: residues 2–22 (ILYVLPTSLSLCLLLMIIYLL), 56–76 (FFILTVLFLIFDVEVVLLFPV), and 85–105 (SPLIIMSIILFMMVLLIGLLY).

This sequence belongs to the complex I subunit 3 family.

The protein localises to the mitochondrion membrane. The catalysed reaction is a ubiquinone + NADH + 5 H(+)(in) = a ubiquinol + NAD(+) + 4 H(+)(out). Functionally, core subunit of the mitochondrial membrane respiratory chain NADH dehydrogenase (Complex I) that is believed to belong to the minimal assembly required for catalysis. Complex I functions in the transfer of electrons from NADH to the respiratory chain. The immediate electron acceptor for the enzyme is believed to be ubiquinone. The chain is NADH-ubiquinone oxidoreductase chain 3 (ND3) from Albinaria caerulea (Land snail).